The primary structure comprises 217 residues: Small ribosomal subunit protein uS3 (217 aa).

A KH type-2 domain is found at 38–106 (IRKFLKKRLS…KVTLDIQEVR (69 aa)).

This sequence belongs to the universal ribosomal protein uS3 family. Part of the 30S ribosomal subunit. Forms a tight complex with proteins S10 and S14.

In terms of biological role, binds the lower part of the 30S subunit head. Binds mRNA in the 70S ribosome, positioning it for translation. The sequence is that of Small ribosomal subunit protein uS3 from Desulfotalea psychrophila (strain LSv54 / DSM 12343).